A 793-amino-acid chain; its full sequence is Ankyrin repeat domain-containing protein SOWAHB (793 aa).

4 disordered regions span residues 83–185 (EEGL…QARA), 219–290 (ATAE…ELLT), 337–360 (QLPLEPGSTEPNSEPPDPCLSSHS), and 396–543 (DFVD…SPRV). Composition is skewed to low complexity over residues 96–108 (APSAGGAAPCSPR), 134–144 (AGAAARAADAA), and 175–185 (AAAAAGAQARA). At Ser-106 the chain carries Phosphoserine. A compositionally biased stretch (basic and acidic residues) spans 220–244 (TAEEKPARALPAQDDRGASREREEG). The span at 246–273 (LAEPAPVPAVAHSPPATVEAATSRASPP) shows a compositional bias: low complexity. Ser-271 bears the Phosphoserine mark. The span at 396–406 (DFVDQESDGSE) shows a compositional bias: acidic residues. 2 stretches are compositionally biased toward low complexity: residues 407–417 (ESSSGPKDSPG) and 498–508 (RSSLAGRAKLS). Residues 521–533 (KRSRRPPRSRKPS) are compositionally biased toward basic residues. ANK repeat units follow at residues 630-659 (TGYTALHWIAKHGDLRALQDLVSGAKKAGI) and 669-699 (CGYTPLHLAAIHGHQGVIKLLVQRLASRVNV). At Ser-761 the chain carries Phosphoserine.

It belongs to the SOWAH family.

This chain is Ankyrin repeat domain-containing protein SOWAHB (SOWAHB), found in Homo sapiens (Human).